The chain runs to 590 residues: UvrABC system protein C (590 aa).

The 78-residue stretch at 14–91 folds into the GIY-YIG domain; the sequence is DQPGCYLMKD…IKKYDPKYNV (78 aa). The UVR domain maps to 196–231; sequence NEIKKELEAKMAEAAEKLEFERAKEFRDQLAHIEST.

It belongs to the UvrC family. Interacts with UvrB in an incision complex.

It localises to the cytoplasm. Functionally, the UvrABC repair system catalyzes the recognition and processing of DNA lesions. UvrC both incises the 5' and 3' sides of the lesion. The N-terminal half is responsible for the 3' incision and the C-terminal half is responsible for the 5' incision. The sequence is that of UvrABC system protein C from Bacillus velezensis (strain DSM 23117 / BGSC 10A6 / LMG 26770 / FZB42) (Bacillus amyloliquefaciens subsp. plantarum).